The primary structure comprises 466 residues: Alpha-1A adrenergic receptor (466 aa).

Over 1–25 (MVFLSGNASDSSNCTQPPAPVNIPK) the chain is Extracellular. Residues Asn-7 and Asn-13 are each glycosylated (N-linked (GlcNAc...) asparagine). Residues 26 to 51 (AILLGVILGVLILFGVPGNILVILSV) traverse the membrane as a helical segment. At 52–63 (ACHRHLHSVTHY) the chain is on the cytoplasmic side. A helical transmembrane segment spans residues 64–89 (YIVNLAVADLLLTSTVLPFSAIFEIL). At 90 to 99 (GYWAFGRVFC) the chain is on the extracellular side. Residues 100–122 (NIWAAVDVLCCTASIMSLCIISI) form a helical membrane-spanning segment. Topologically, residues 123–143 (DRYIGVSYPLRYPTIVTQRRG) are cytoplasmic. The chain crosses the membrane as a helical span at residues 144 to 168 (LRALLCLWALSLVISIGPLFGWRQP). Over 169–181 (APQDETICQINED) the chain is Extracellular. Residues 182 to 205 (PSYVLFSALGSFYVPLAIILVMYC) form a helical membrane-spanning segment. Over 206-272 (RVYVVAKRES…KFSREKKAAK (67 aa)) the chain is Cytoplasmic. The chain crosses the membrane as a helical span at residues 273-297 (TLGIVVGCFVLCWLPFFLVMPIGSF). The Extracellular segment spans residues 298–304 (FPDFKPS). Residues 305 to 329 (ETVFKIVFWLGYLNSCINPIIYPCS) form a helical membrane-spanning segment. Topologically, residues 330-466 (SQEFKKAFQN…ISLSENGEEV (137 aa)) are cytoplasmic. A Nuclear localization signal motif is present at residues 334–349 (KKAFQNVLKIQCLRRK). Cys-345 carries the S-palmitoyl cysteine lipid modification.

This sequence belongs to the G-protein coupled receptor 1 family. Adrenergic receptor subfamily. ADRA1A sub-subfamily. As to quaternary structure, homo- and heterooligomer. Heterooligomerizes with ADRA1B homooligomers in cardiac myocytes. Interacts with CAVIN4.

It localises to the nucleus membrane. The protein resides in the cell membrane. Its subcellular location is the cytoplasm. It is found in the membrane. The protein localises to the caveola. In terms of biological role, this alpha-adrenergic receptor mediates its action by association with G proteins that activate a phosphatidylinositol-calcium second messenger system. Its effect is mediated by G(q) and G(11) proteins. Nuclear ADRA1A-ADRA1B heterooligomers regulate phenylephrine (PE)-stimulated ERK signaling in cardiac myocytes. The polypeptide is Alpha-1A adrenergic receptor (ADRA1A) (Cavia porcellus (Guinea pig)).